Consider the following 447-residue polypeptide: Gastrin/cholecystokinin type B receptor (447 aa).

The Extracellular portion of the chain corresponds to 1-57; that stretch reads MELLKLNRSVQGTGPGPGASLCRPGAPLLNSSSVGNLSCEPPRIRGAGTRELELAIR. 3 N-linked (GlcNAc...) asparagine glycosylation sites follow: Asn7, Asn30, and Asn36. The helical transmembrane segment at 58 to 79 threads the bilayer; sequence ITLYAVIFLMSVGGNMLIIVVL. At 80-87 the chain is on the cytoplasmic side; it reads GLSRRLRT. A helical membrane pass occupies residues 88-109; sequence VTNAFLLSLAVSDLLLAVACMP. Topologically, residues 110 to 131 are extracellular; sequence FTLLPNLMGTFIFGTVICKAVS. Cys127 and Cys205 are oxidised to a cystine. A helical membrane pass occupies residues 132-150; that stretch reads YLMGVSVSVSTLSLVAIAL. Residues 151 to 170 lie on the Cytoplasmic side of the membrane; the sequence is ERYSAICRPLQARVWQTRSH. Residues 171 to 189 traverse the membrane as a helical segment; that stretch reads AARVIVATWLLSGLLMVPY. Residues 190-219 are Extracellular-facing; it reads PVYTVVQPVGPRVLQCVHRWPSARVRQTWS. The chain crosses the membrane as a helical span at residues 220-242; the sequence is VLLLLLLFFIPGVVMAVAYGLIS. The Cytoplasmic portion of the chain corresponds to 243-333; sequence RELYLGLRFD…KLLAKKRVVR (91 aa). The interval 258–285 is disordered; it reads DSQSRVRNQGGLPGAVHQNGRCRPETGA. Residues 334–355 form a helical membrane-spanning segment; sequence MLLVIVVLFFLCWLPVYSANTW. Over 356–373 the chain is Extracellular; it reads RAFDGPGAHRALSGAPIS. A helical membrane pass occupies residues 374–394; it reads FIHLLSYASACVNPLVYCFMH. Over 395–447 the chain is Cytoplasmic; the sequence is RRFRQACLETCARCCPRPPRARPRALPDEDPPTPSIASLSRLSYTTISTLGPG. Residue Cys408 is the site of S-palmitoyl cysteine attachment.

The protein belongs to the G-protein coupled receptor 1 family. As to expression, isoform 1 is expressed in brain, pancreas, stomach, the colon cancer cell line LoVo and the T-lymphoblastoma Jurkat, but not in heart, placenta, liver, lung, skeletal muscle, kidney or the stomach cancer cell line AGS. Expressed at high levels in the small cell lung cancer cell line NCI-H510, at lower levels in NCI-H345, NCI-H69 and GLC-28 cell lines, not expressed in GLC-19 cell line. Within the stomach, expressed at high levels in the mucosa of the gastric fundus and at low levels in the antrum and duodenum. Isoform 2 is present in pancreatic cancer cells and colorectal cancer cells, but not in normal pancreas or colonic mucosa. Isoform 3 is expressed in brain, pancreas, stomach, the stomach cancer cell line AGS and the colon cancer cell line LoVo.

The protein resides in the cell membrane. Its function is as follows. Receptor for gastrin and cholecystokinin. The CCK-B receptors occur throughout the central nervous system where they modulate anxiety, analgesia, arousal, and neuroleptic activity. This receptor mediates its action by association with G proteins that activate a phosphatidylinositol-calcium second messenger system. Isoform 2 is constitutively activated and may regulate cancer cell proliferation via a gastrin-independent mechanism. In Homo sapiens (Human), this protein is Gastrin/cholecystokinin type B receptor.